The following is a 540-amino-acid chain: DNA-(apurinic or apyrimidinic site) endonuclease (540 aa).

Residues Asn206 and Glu239 each coordinate Mg(2+). The segment at 256-276 is disordered; that stretch reads NNKVYGGKKNEGEERNRGSVK. Residues 263-276 are compositionally biased toward basic and acidic residues; that stretch reads KKNEGEERNRGSVK. Mg(2+) is bound by residues Asp400, Asn402, Asp530, and His531. The Proton acceptor role is filled by His531.

It belongs to the DNA repair enzymes AP/ExoA family. Mg(2+) is required as a cofactor. Requires Mn(2+) as cofactor. In terms of processing, may be proteolytically cleaved.

It is found in the mitochondrion. It carries out the reaction Exonucleolytic cleavage in the 3'- to 5'-direction to yield nucleoside 5'-phosphates.. Functionally, multifunctional protein that plays a central role in mitochondrial DNA base excision repair pathway induced by oxidative stress. Has apurinic/apyrimidinic (AP) endonuclease activity towards double-stranded DNA (dsDNA). Has nucleotide incision repair (NIR) activity; acts on dsDNA with oxidized bases thymine glycol and 5,6-dihydro-2'-deoxyuridine. Has 3'-5' exonuclease; can use dsDNA templates with 3'-OH termini including blunt-end, gapped and mismatched 3'-recessed. Has 3'-phosphatase activity; cleaves 3'-phosphate from blunt, recessed and gapped dsDNA templates, followed by 3'-5' exonuclease activity. Has RNase H-like activity; cleaves RNA on 3'-recessed RNA-DNA duplex. Plays a role in merosome infection of host erythrocytes. The polypeptide is DNA-(apurinic or apyrimidinic site) endonuclease (Plasmodium berghei (strain Anka)).